Here is a 219-residue protein sequence, read N- to C-terminus: Ribose-5-phosphate isomerase A (219 aa).

Substrate-binding positions include Ser-28–Thr-31, Asp-81–Asp-84, and Lys-94–Gly-97. Catalysis depends on Glu-103, which acts as the Proton acceptor. Lys-121 serves as a coordination point for substrate.

This sequence belongs to the ribose 5-phosphate isomerase family. Homodimer.

The catalysed reaction is aldehydo-D-ribose 5-phosphate = D-ribulose 5-phosphate. It functions in the pathway carbohydrate degradation; pentose phosphate pathway; D-ribose 5-phosphate from D-ribulose 5-phosphate (non-oxidative stage): step 1/1. Its function is as follows. Catalyzes the reversible conversion of ribose-5-phosphate to ribulose 5-phosphate. In Actinobacillus succinogenes (strain ATCC 55618 / DSM 22257 / CCUG 43843 / 130Z), this protein is Ribose-5-phosphate isomerase A.